The following is a 171-amino-acid chain: Neudesin (171 aa).

Positions 1 to 30 are cleaved as a signal peptide; the sequence is MARPAPWWRLRLLAALVLALALVPVPSAWA. In terms of domain architecture, Cytochrome b5 heme-binding spans 43–128; sequence VRLFTEEELA…KELEALDDVF (86 aa). Lys-135 is modified (N6-acetyllysine).

This sequence belongs to the cytochrome b5 family. MAPR subfamily. In terms of assembly, interacts with PINK1 and PARK7. In terms of tissue distribution, in the embryo, expressed most abundantly in brain and spinal cord. Widely expressed in adult tissues including brain, heart, lung and kidney. In brain, expressed in neurons but not in glial cells. In the hypothalamus is expressed primarily in the paraventricular nucleus (PVN), with lower levels of expression in the arcuate nucleus (ARC).

The protein resides in the secreted. Its subcellular location is the extracellular space. The protein localises to the mitochondrion. It is found in the endoplasmic reticulum. Acts as a neurotrophic factor in postnatal mature neurons, enhancing neuronal survival. Promotes cell proliferation and neurogenesis in undifferentiated neural pro-genitor cells at the embryonic stage and inhibits differentiation of astrocytes. Its neurotrophic activity is exerted via MAPK1/ERK2, MAPK3/ERK1 and AKT1/AKT pathways. Neurotrophic activity is enhanced by binding to heme. Also acts as an anorexigenic neurotrophic factor that contributes to energy balance. The chain is Neudesin from Mus musculus (Mouse).